Here is an 84-residue protein sequence, read N- to C-terminus: Beta-defensin 119 (84 aa).

A signal peptide spans 1–21 (MKLLYLFLAILLAIEEPVISG). 2 cysteine pairs are disulfide-bonded: C35-C49 and C39-C56.

Belongs to the beta-defensin family.

The protein resides in the secreted. In terms of biological role, has antibacterial activity. The chain is Beta-defensin 119 (DEFB119) from Pan troglodytes (Chimpanzee).